The chain runs to 418 residues: L-rhamnose isomerase (418 aa).

Residues His262, Asp294, and Asp296 each contribute to the Mn(2+) site.

This sequence belongs to the rhamnose isomerase family. As to quaternary structure, homotetramer. It depends on Mn(2+) as a cofactor.

Its subcellular location is the cytoplasm. The enzyme catalyses L-rhamnopyranose = L-rhamnulose. It functions in the pathway carbohydrate degradation; L-rhamnose degradation; glycerone phosphate from L-rhamnose: step 1/3. Catalyzes the interconversion of L-rhamnose and L-rhamnulose. This Cronobacter sakazakii (strain ATCC BAA-894) (Enterobacter sakazakii) protein is L-rhamnose isomerase.